A 453-amino-acid polypeptide reads, in one-letter code: Histidine--tRNA ligase (453 aa).

This sequence belongs to the class-II aminoacyl-tRNA synthetase family. Homodimer.

The protein localises to the cytoplasm. The catalysed reaction is tRNA(His) + L-histidine + ATP = L-histidyl-tRNA(His) + AMP + diphosphate + H(+). The chain is Histidine--tRNA ligase from Cytophaga hutchinsonii (strain ATCC 33406 / DSM 1761 / CIP 103989 / NBRC 15051 / NCIMB 9469 / D465).